A 162-amino-acid polypeptide reads, in one-letter code: Caveolin-2 (162 aa).

Over 1 to 86 (MGLETEKADV…FEISKYVMYK (86 aa)) the chain is Cytoplasmic. The residue at position 19 (Y19) is a Phosphotyrosine; by SRC. Phosphoserine is present on residues S20 and S23. At Y27 the chain carries Phosphotyrosine; by SRC. S36 bears the Phosphoserine mark. The helical intramembrane region spans 87 to 107 (FLTVFLSIPLAFLAGILFATL). The Cytoplasmic portion of the chain corresponds to 108-162 (SCLHIWIIMPFVKTCLMVLPSVQTIWKSVTDAIIAPLCTSIGRSFSSVSLQLSHD).

The protein belongs to the caveolin family. In terms of assembly, monomer or homodimer. Interacts with CAV1; the interaction forms a stable heterooligomeric complex that is required for targeting to lipid rafts and for caveolae formation. Tyrosine phosphorylated forms do not form heterooligomers with the Tyr-19-phosphorylated form existing as a monomer or dimer, and the Tyr-27-form as a monomer only. Interacts (tyrosine phosphorylated form) with the SH2 domain-containing proteins, RASA1, NCK1 and SRC. Interacts (tyrosine phosphorylated form) with INSR, the interaction (Tyr-27-phosphorylated form) is increased on insulin stimulation. Interacts (Tyr-19 phosphorylated form) with MAPK1 (phosphorylated form); the interaction, promoted by insulin, leads to nuclear location and MAPK1 activation. Interacts with STAT3; the interaction is increased on insulin-induced tyrosine phosphorylation leading to STAT activation. In terms of processing, phosphorylated on serine and tyrosine residues. CAV1 promotes phosphorylation on Ser-23 which then targets the complex to the plasma membrane, lipid rafts and caveolae. Phosphorylation on Ser-36 appears to modulate mitosis in endothelial cells. Phosphorylation on both Tyr-19 and Tyr-27 is required for insulin-induced 'Ser-727' phosphorylation of STAT3 and its activation. Phosphorylation on Tyr-19 is required for insulin-induced phosphorylation of MAPK1 and DNA binding of STAT3. Tyrosine phosphorylation is induced by both EGF and insulin (By. similarity).

Its subcellular location is the nucleus. It localises to the cytoplasm. It is found in the golgi apparatus membrane. The protein localises to the cell membrane. The protein resides in the membrane. Its subcellular location is the caveola. May act as a scaffolding protein within caveolar membranes. Interacts directly with G-protein alpha subunits and can functionally regulate their activity. Acts as an accessory protein in conjunction with CAV1 in targeting to lipid rafts and driving caveolae formation. The Ser-36 phosphorylated form has a role in modulating mitosis in endothelial cells. Positive regulator of cellular mitogenesis of the MAPK signaling pathway. Required for the insulin-stimulated nuclear translocation and activation of MAPK1 and STAT3, and the subsequent regulation of cell cycle progression. This chain is Caveolin-2 (CAV2), found in Saimiri boliviensis boliviensis (Bolivian squirrel monkey).